A 79-amino-acid polypeptide reads, in one-letter code: U-scoloptoxin(15)-Sm1a (79 aa).

A signal peptide spans 1–25; it reads MKMNVVVLSVVVLLLFIANIQQTEA.

This sequence belongs to the scoloptoxin-15 family. Post-translationally, contains 2 disulfide bonds. Expressed by the venom gland.

Its subcellular location is the secreted. This is U-scoloptoxin(15)-Sm1a from Scolopendra morsitans (Tanzanian blue ringleg centipede).